The following is a 386-amino-acid chain: Alanine racemase (386 aa).

Lysine 38 (proton acceptor; specific for D-alanine) is an active-site residue. Lysine 38 is modified (N6-(pyridoxal phosphate)lysine). Arginine 136 lines the substrate pocket. Residue tyrosine 267 is the Proton acceptor; specific for L-alanine of the active site. Methionine 315 is a binding site for substrate.

It belongs to the alanine racemase family. Pyridoxal 5'-phosphate is required as a cofactor.

It carries out the reaction L-alanine = D-alanine. The protein operates within amino-acid biosynthesis; D-alanine biosynthesis; D-alanine from L-alanine: step 1/1. Catalyzes the interconversion of L-alanine and D-alanine. May also act on other amino acids. This chain is Alanine racemase (alr), found in Clostridium perfringens (strain ATCC 13124 / DSM 756 / JCM 1290 / NCIMB 6125 / NCTC 8237 / Type A).